A 272-amino-acid polypeptide reads, in one-letter code: 3-methyl-2-oxobutanoate hydroxymethyltransferase (272 aa).

2 residues coordinate Mg(2+): D52 and D91. 3-methyl-2-oxobutanoate contacts are provided by residues 52-53 (DS), D91, and K121. E123 lines the Mg(2+) pocket. The active-site Proton acceptor is E190.

It belongs to the PanB family. As to quaternary structure, homodecamer; pentamer of dimers. Mg(2+) is required as a cofactor.

It localises to the cytoplasm. The enzyme catalyses 3-methyl-2-oxobutanoate + (6R)-5,10-methylene-5,6,7,8-tetrahydrofolate + H2O = 2-dehydropantoate + (6S)-5,6,7,8-tetrahydrofolate. Its pathway is cofactor biosynthesis; (R)-pantothenate biosynthesis; (R)-pantoate from 3-methyl-2-oxobutanoate: step 1/2. Functionally, catalyzes the reversible reaction in which hydroxymethyl group from 5,10-methylenetetrahydrofolate is transferred onto alpha-ketoisovalerate to form ketopantoate. The polypeptide is 3-methyl-2-oxobutanoate hydroxymethyltransferase (Christiangramia forsetii (strain DSM 17595 / CGMCC 1.15422 / KT0803) (Gramella forsetii)).